A 525-amino-acid polypeptide reads, in one-letter code: Peptide chain release factor 3 (525 aa).

Positions 9–276 (AKRRTFAIIS…GFTRYAPAPQ (268 aa)) constitute a tr-type G domain. GTP-binding positions include 18-25 (SHPDAGKT), 86-90 (DTPGH), and 140-143 (NKFD).

Belongs to the TRAFAC class translation factor GTPase superfamily. Classic translation factor GTPase family. PrfC subfamily.

It localises to the cytoplasm. Increases the formation of ribosomal termination complexes and stimulates activities of RF-1 and RF-2. It binds guanine nucleotides and has strong preference for UGA stop codons. It may interact directly with the ribosome. The stimulation of RF-1 and RF-2 is significantly reduced by GTP and GDP, but not by GMP. The sequence is that of Peptide chain release factor 3 from Francisella tularensis subsp. holarctica (strain FTNF002-00 / FTA).